Reading from the N-terminus, the 307-residue chain is Aspartate carbamoyltransferase catalytic subunit (307 aa).

Residues R59 and T60 each contribute to the carbamoyl phosphate site. K87 lines the L-aspartate pocket. The carbamoyl phosphate site is built by R109, H137, and Q140. Positions 170 and 224 each coordinate L-aspartate. G265 and P266 together coordinate carbamoyl phosphate.

Belongs to the aspartate/ornithine carbamoyltransferase superfamily. ATCase family. As to quaternary structure, heterododecamer (2C3:3R2) of six catalytic PyrB chains organized as two trimers (C3), and six regulatory PyrI chains organized as three dimers (R2).

The enzyme catalyses carbamoyl phosphate + L-aspartate = N-carbamoyl-L-aspartate + phosphate + H(+). It functions in the pathway pyrimidine metabolism; UMP biosynthesis via de novo pathway; (S)-dihydroorotate from bicarbonate: step 2/3. Functionally, catalyzes the condensation of carbamoyl phosphate and aspartate to form carbamoyl aspartate and inorganic phosphate, the committed step in the de novo pyrimidine nucleotide biosynthesis pathway. The chain is Aspartate carbamoyltransferase catalytic subunit from Cytophaga hutchinsonii (strain ATCC 33406 / DSM 1761 / CIP 103989 / NBRC 15051 / NCIMB 9469 / D465).